The sequence spans 383 residues: Acetylornithine deacetylase (383 aa).

Residue His80 participates in Zn(2+) binding. Residue Asp82 is part of the active site. Asp112 contacts Zn(2+). Glu144 is an active-site residue. Residues Glu145, Glu169, and His355 each contribute to the Zn(2+) site.

This sequence belongs to the peptidase M20A family. ArgE subfamily. As to quaternary structure, homodimer. It depends on Zn(2+) as a cofactor. Co(2+) serves as cofactor. The cofactor is glutathione.

The protein resides in the cytoplasm. The enzyme catalyses N(2)-acetyl-L-ornithine + H2O = L-ornithine + acetate. It participates in amino-acid biosynthesis; L-arginine biosynthesis; L-ornithine from N(2)-acetyl-L-ornithine (linear): step 1/1. In terms of biological role, catalyzes the hydrolysis of the amide bond of N(2)-acetylated L-amino acids. Cleaves the acetyl group from N-acetyl-L-ornithine to form L-ornithine, an intermediate in L-arginine biosynthesis pathway, and a branchpoint in the synthesis of polyamines. In Escherichia coli O8 (strain IAI1), this protein is Acetylornithine deacetylase.